Here is a 520-residue protein sequence, read N- to C-terminus: GMP synthase [glutamine-hydrolyzing] (520 aa).

Positions 9 to 202 (TILIIDFGSQ…VHRIVGVKPG (194 aa)) constitute a Glutamine amidotransferase type-1 domain. Residue C86 is the Nucleophile of the active site. Catalysis depends on residues H176 and E178. The 193-residue stretch at 203–395 (WTMGAYREQA…LGLPDSFIGR (193 aa)) folds into the GMPS ATP-PPase domain. 230–236 (SGGVDSS) serves as a coordination point for ATP.

Homodimer.

It carries out the reaction XMP + L-glutamine + ATP + H2O = GMP + L-glutamate + AMP + diphosphate + 2 H(+). It functions in the pathway purine metabolism; GMP biosynthesis; GMP from XMP (L-Gln route): step 1/1. Catalyzes the synthesis of GMP from XMP. The sequence is that of GMP synthase [glutamine-hydrolyzing] from Brucella abortus (strain S19).